Consider the following 220-residue polypeptide: DNA mismatch repair protein MutH (220 aa).

The protein belongs to the MutH family.

Its subcellular location is the cytoplasm. Functionally, sequence-specific endonuclease that cleaves unmethylated GATC sequences. It is involved in DNA mismatch repair. The chain is DNA mismatch repair protein MutH from Buchnera aphidicola subsp. Baizongia pistaciae (strain Bp).